Consider the following 472-residue polypeptide: Eukaryotic translation initiation factor 2 subunit 3 (472 aa).

An N-acetylalanine modification is found at A2. S16 carries the post-translational modification Phosphoserine. The 210-residue stretch at 39–248 (QATINIGTIG…IVKKIPVPPR (210 aa)) folds into the tr-type G domain. The G1 stretch occupies residues 48-55 (GHVAHGKS). 51 to 56 (AHGKST) lines the GTP pocket. The G2 stretch occupies residues 76–80 (NITIK). A G3 region spans residues 134-137 (DCPG). Residues 190–193 (NKID) and 225–227 (SAQ) contribute to the GTP site. A G4 region spans residues 190-193 (NKID). Residues 225–227 (SAQ) form a G5 region. The segment at 457–469 (GQIRRGVTIKPTV) is interacts with CDC123.

Belongs to the TRAFAC class translation factor GTPase superfamily. Classic translation factor GTPase family. EIF2G subfamily. As to quaternary structure, eukaryotic translation initiation factor 2 eIF2 is a heterotrimeric complex composed of an alpha (EIF2S1), a beta (EIF2S2) and a gamma (EIF2S3) chain. eIF2 is member of the 43S pre-initiation complex (43S PIC). Interacts (via C-terminus) with CDC123; the interaction is direct.

Its subcellular location is the cytoplasm. It is found in the cytosol. It catalyses the reaction GTP + H2O = GDP + phosphate + H(+). Functionally, member of the eIF2 complex that functions in the early steps of protein synthesis by forming a ternary complex with GTP and initiator tRNA. This complex binds to a 40S ribosomal subunit, followed by mRNA binding to form the 43S pre-initiation complex (43S PIC). Junction of the 60S ribosomal subunit to form the 80S initiation complex is preceded by hydrolysis of the GTP bound to eIF2 and release of an eIF2-GDP binary complex. In order for eIF2 to recycle and catalyze another round of initiation, the GDP bound to eIF2 must exchange with GTP by way of a reaction catalyzed by eIF-2B. In Sus scrofa (Pig), this protein is Eukaryotic translation initiation factor 2 subunit 3 (EIF2S3).